The following is a 1045-amino-acid chain: Cation efflux system protein CusA (1045 aa).

The next 12 helical transmembrane spans lie at 14–34 (FLVL…IINT), 336–356 (LSGK…LFLW), 361–381 (ALVA…VMHF), 388–408 (IMSL…AIVM), 444–464 (VGPA…PIFT), 483–503 (AMAG…GYWI), 530–550 (VLHW…TVLW), 869–889 (KLKL…YLAF), 896–916 (LLII…LWWM), 926–946 (TGFI…LMYL), 983–1003 (AMTV…TGAG), and 1010–1030 (IAAP…FIIP).

This sequence belongs to the resistance-nodulation-cell division (RND) (TC 2.A.6) family. The cus efflux system is composed of CusA, CusB, CusC and CusF.

The protein resides in the cell inner membrane. In terms of biological role, part of a cation efflux system that mediates resistance to copper and silver. This chain is Cation efflux system protein CusA (cusA), found in Escherichia coli O157:H7.